Here is a 385-residue protein sequence, read N- to C-terminus: Polyketide synthase 1 (385 aa).

Residue Cys-157 is part of the active site.

This sequence belongs to the thiolase-like superfamily. Chalcone/stilbene synthases family. As to expression, expressed in glandular trichomes.

It localises to the cytoplasm. Its function is as follows. Polyketide synthase responsible for the biosynthesis of secondary metabolites. The polypeptide is Polyketide synthase 1 (PKSG1) (Cannabis sativa (Hemp)).